A 154-amino-acid polypeptide reads, in one-letter code: uncharacterized protein (154 aa).

The transit peptide at 1–42 (MLRVIWKHSSRVTRSIELSNISTTNHTRSLRRLSWISPRRFY) directs the protein to the mitochondrion.

It is found in the mitochondrion. This is an uncharacterized protein from Saccharomyces cerevisiae (strain ATCC 204508 / S288c) (Baker's yeast).